The following is a 324-amino-acid chain: Gamma-soluble NSF attachment protein (324 aa).

Residues 285 to 298 (NPTINSTAPQQQYS) are compositionally biased toward polar residues. The disordered stretch occupies residues 285-324 (NPTINSTAPQQQYSNTTTTTTNNTNNNNPTSQQDDDEDVL). Residues 299–312 (NTTTTTTNNTNNNN) are compositionally biased toward low complexity.

It belongs to the SNAP family. As to quaternary structure, interacts with nsfA and probably SNARE proteins.

It localises to the cytoplasmic vesicle membrane. Functionally, may be required for vesicular transport between the endoplasmic reticulum and the Golgi apparatus. Involved in vesicle fusion with nsfA and probably SNARE proteins. The chain is Gamma-soluble NSF attachment protein (snpC) from Dictyostelium discoideum (Social amoeba).